A 360-amino-acid polypeptide reads, in one-letter code: Phenylalanine--tRNA ligase alpha subunit (360 aa).

Residue glutamate 260 participates in Mg(2+) binding.

Belongs to the class-II aminoacyl-tRNA synthetase family. Phe-tRNA synthetase alpha subunit type 1 subfamily. In terms of assembly, tetramer of two alpha and two beta subunits. Mg(2+) serves as cofactor.

It is found in the cytoplasm. The enzyme catalyses tRNA(Phe) + L-phenylalanine + ATP = L-phenylalanyl-tRNA(Phe) + AMP + diphosphate + H(+). The chain is Phenylalanine--tRNA ligase alpha subunit from Methylocella silvestris (strain DSM 15510 / CIP 108128 / LMG 27833 / NCIMB 13906 / BL2).